We begin with the raw amino-acid sequence, 3414 residues long: Genome polyprotein (3414 aa).

A disordered region spans residues 1 to 27 (MAGKAILKGKGGGPPRRVSKETAKKTR). At 1–98 (MAGKAILKGK…LQKRGKRRST (98 aa)) the chain is on the cytoplasmic side. Residues 98–116 (TTDWTGWLLVAMLLSIALA) constitute a propeptide, ER anchor for the capsid protein C, removed in mature form by serine protease NS3. Residues 99-119 (TDWTGWLLVAMLLSIALAATV) traverse the membrane as a helical segment. Residues 120–242 (RKEGDGTTVI…HLTRVEGWVW (123 aa)) are Extracellular-facing. Residue Asn144 is glycosylated (N-linked (GlcNAc...) asparagine; by host). Residues 243–260 (KNKSLTLAVVVIVWMTVE) traverse the membrane as a helical segment. A topological domain (cytoplasmic) is located at residue Ser261. Residues 262–280 (AVTRIVIVSALLCLAPAYA) form a helical membrane-spanning segment. Topologically, residues 281-727 (SRCTHLENRD…HTVLGGAFNS (447 aa)) are extracellular. Cystine bridges form between Cys283-Cys310, Cys340-Cys396, Cys340-Cys401, Cys354-Cys385, Cys372-Cys396, and Cys372-Cys401. The interval 378–391 (DRGWGNHCGLFGKG) is fusion peptide. A glycan (N-linked (GlcNAc...) asparagine; by host) is linked at Asn434. Cystine bridges form between Cys466–Cys570 and Cys587–Cys618. The helical transmembrane segment at 728–748 (VFGGVGFLPRILLGISLAWLG) threads the bilayer. Residues 749–755 (LNMRNPT) lie on the Cytoplasmic side of the membrane. The helical transmembrane segment at 756-776 (MSMSFLLAGGLVLTMTLGVGA) threads the bilayer. Residues 777-1132 (DVGCAVDTER…RSMVVADNGE (356 aa)) lie on the Extracellular side of the membrane. 6 cysteine pairs are disulfide-bonded: Cys780–Cys791, Cys831–Cys920, Cys955–Cys1000, Cys1057–Cys1106, Cys1068–Cys1090, and Cys1089–Cys1093. Asn861, Asn983, and Asn999 each carry an N-linked (GlcNAc...) asparagine; by host glycan. A helical transmembrane segment spans residues 1133–1153 (LLSEGGIPGIVAVFVVLEYII). At 1154–1158 (RKRPS) the chain is on the cytoplasmic side. Residues 1159-1179 (AGLTVVWGGVVVLALLVTGMV) form a helical membrane-spanning segment. Residues 1180–1187 (TLQSMLRY) are Lumenal-facing. A helical transmembrane segment spans residues 1188-1208 (VIAVGVTFHLELGPEIVALML). Over 1209 to 1236 (LQAVFELRVGLLGAFVLRRSLTTREVVT) the chain is Cytoplasmic. The helical transmembrane segment at 1237–1257 (IYFLLLVLELGLPSANLEALW) threads the bilayer. Residues 1258-1293 (GWADALAMGAMIFRACTAEGKTGLGLLLVALMTQQN) lie on the Lumenal side of the membrane. The helical transmembrane segment at 1294–1314 (AVIVHQGLVIFLSVASACSVW) threads the bilayer. Residues 1315 to 1363 (KLLRGQREQKGLSWIVPLAGRLGGKGSGIRLLAFWELASRRDRRSFSEP) lie on the Cytoplasmic side of the membrane. Residues 1364-1381 (LTVVGVMLTLASGMMRHT) form a helical membrane-spanning segment. A topological domain (lumenal) is located at residue Ser1382. A helical transmembrane segment spans residues 1383–1403 (QEALCALAAASFLLLMLVLGT). Over 1404–1454 (RKMQLVAEWSGCVEWHPDLADEGGEISLRVRQDALGNFHLTELEKEERMMA) the chain is Cytoplasmic. The segment at 1410–1449 (AEWSGCVEWHPDLADEGGEISLRVRQDALGNFHLTELEKE) is interacts with and activates NS3 protease. An intramembrane region (helical) is located at residues 1455–1475 (FWLLAGLTASALHWTGILVVM). At 1476–2160 (GLWTMSEMLR…KMAERDAPEA (685 aa)) the chain is on the cytoplasmic side. The region spanning 1490–1669 (SDLVFSGQSG…EVEKSRPNLP (180 aa)) is the Peptidase S7 domain. Catalysis depends on charge relay system; for serine protease NS3 activity residues His1543, Asp1567, and Ser1627. One can recognise a Helicase ATP-binding domain in the interval 1675 to 1831 (TGWTSKGTIT…ESNGAITSEE (157 aa)). 1688-1695 (MHPGSGKT) is an ATP binding site. Residues 1779-1782 (DEAH) carry the DEAH box motif. Residues 1841–2000 (DGFDWITEYE…TLRGPVATFY (160 aa)) enclose the Helicase C-terminal domain. Lys1883 is subject to N6-acetyllysine; by host. Residues 2161–2181 (FLTMVEMVVLGLATLGAVWCL) form a helical membrane-spanning segment. Residues 2182–2189 (VLRTSISR) are Lumenal-facing. The segment at residues 2190–2210 (MMLGTMVLLVSLALLWAGGVG) is an intramembrane region (helical). Residue Tyr2211 is a topological domain, lumenal. A helical membrane pass occupies residues 2212–2232 (GSMAGVALVFYTLLTVLQPEA). Residues 2233–2244 (GKQRSSDDNKLA) are Cytoplasmic-facing. A helical transmembrane segment spans residues 2245-2265 (YFLLTLCSLAGLVAANEMGFL). Residues 2266–2299 (EKTKADLSAVLWSEREEPRVWSEWTNIDIQPAKS) lie on the Lumenal side of the membrane. The segment at residues 2300–2320 (WGTYVLVVSLFTPYIIHQLQT) is an intramembrane region (helical). Over 2321–2343 (RIQQLVNSAVASGAQAMRDLGGG) the chain is Lumenal. Residues 2344 to 2364 (TPFFGVAGHVLTLGVVSLVGA) constitute an intramembrane region (helical). Over 2365-2368 (TPTS) the chain is Lumenal. The helical transmembrane segment at 2369–2389 (LVVGVGLAAFHLAIVVSGLEA) threads the bilayer. At 2390–2432 (ELTQRAHKVFFSAMVRNPMVDGDVINPFGDGEVKPALYERKMS) the chain is on the cytoplasmic side. Residues 2433-2453 (LILAMILCFMSVVLNRTVPAV) traverse the membrane as a helical segment. Topologically, residues 2454–2477 (TEASAVGLAAAGQLIRPEADTLWT) are lumenal. A helical membrane pass occupies residues 2478–2498 (MPVACGLSGVVRGSLWGFLPL). Over 2499 to 3414 (GHRLWLRTSG…WELKVESSII (916 aa)) the chain is Cytoplasmic. The mRNA cap 0-1 NS5-type MT domain occupies 2512 to 2776 (GGSEGDTLGD…EMDLGVGTRC (265 aa)). Position 2567 (Ser2567) interacts with S-adenosyl-L-methionine. Ser2567 is subject to Phosphoserine. Lys2572 acts as the For 2'-O-MTase activity in catalysis. S-adenosyl-L-methionine contacts are provided by Gly2597, Trp2598, Thr2615, Ile2616, and Val2643. Residue Asp2657 is the For 2'-O-MTase activity of the active site. Ile2658 is a binding site for S-adenosyl-L-methionine. Catalysis depends on for 2'-O-MTase activity residues Lys2694 and Glu2730. Residues 2730 to 2734 (EMYYS) are interaction with host SCRIB. Tyr2732 provides a ligand contact to S-adenosyl-L-methionine. Residues Glu2950, His2954, Cys2959, and Cys2962 each contribute to the Zn(2+) site. The RdRp catalytic domain maps to 3040–3189 (GLFYADDTAG…RPIDDRFSKA (150 aa)). Residues His3224, Cys3240, and Cys3359 each coordinate Zn(2+).

This sequence in the N-terminal section; belongs to the class I-like SAM-binding methyltransferase superfamily. mRNA cap 0-1 NS5-type methyltransferase family. Homodimer. As to quaternary structure, forms heterodimers with envelope protein E in the endoplasmic reticulum and Golgi. In terms of assembly, homodimer; in the endoplasmic reticulum and Golgi. Forms homodimers as well as homohexamers. NS1 may interact with NS4A. As to quaternary structure, forms a heterodimer with serine protease NS3. May form homooligomers. In terms of assembly, forms a heterodimer with NS2B. Interacts with NS4B. Interacts with unphosphorylated RNA-directed RNA polymerase NS5; this interaction stimulates RNA-directed RNA polymerase NS5 guanylyltransferase activity. Interacts with serine protease NS3. As to quaternary structure, interacts with host STAT2; this interaction inhibits the phosphorylation of the latter, and, when all viral proteins are present (polyprotein), targets STAT2 for degradation. Specific enzymatic cleavages in vivo yield mature proteins. Cleavages in the lumen of endoplasmic reticulum are performed by host signal peptidase, whereas cleavages in the cytoplasmic side are performed by serine protease NS3. Signal cleavage at the 2K-4B site requires a prior NS3 protease-mediated cleavage at the 4A-2K site. In terms of processing, cleaved in post-Golgi vesicles by a host furin, releasing the mature small envelope protein M, and peptide pr. This cleavage is incomplete as up to 30% of viral particles still carry uncleaved prM. Post-translationally, N-glycosylated. N-glycosylated. The excreted form is glycosylated and this is required for efficient secretion of the protein from infected cells. In terms of processing, acetylated by host KAT5. Acetylation modulates NS3 RNA-binding and unwinding activities and plays an important positive role for viral replication. Post-translationally, phosphorylated on serines residues. This phosphorylation may trigger NS5 nuclear localization.

It localises to the virion. Its subcellular location is the host nucleus. It is found in the host cytoplasm. The protein localises to the host perinuclear region. The protein resides in the secreted. It localises to the virion membrane. Its subcellular location is the host endoplasmic reticulum membrane. The catalysed reaction is Selective hydrolysis of -Xaa-Xaa-|-Yaa- bonds in which each of the Xaa can be either Arg or Lys and Yaa can be either Ser or Ala.. It carries out the reaction RNA(n) + a ribonucleoside 5'-triphosphate = RNA(n+1) + diphosphate. The enzyme catalyses a ribonucleoside 5'-triphosphate + H2O = a ribonucleoside 5'-diphosphate + phosphate + H(+). It catalyses the reaction ATP + H2O = ADP + phosphate + H(+). The catalysed reaction is a 5'-end (5'-triphosphoguanosine)-ribonucleoside in mRNA + S-adenosyl-L-methionine = a 5'-end (N(7)-methyl 5'-triphosphoguanosine)-ribonucleoside in mRNA + S-adenosyl-L-homocysteine. It carries out the reaction a 5'-end (N(7)-methyl 5'-triphosphoguanosine)-ribonucleoside in mRNA + S-adenosyl-L-methionine = a 5'-end (N(7)-methyl 5'-triphosphoguanosine)-(2'-O-methyl-ribonucleoside) in mRNA + S-adenosyl-L-homocysteine + H(+). Functionally, plays a role in virus budding by binding to the cell membrane and gathering the viral RNA into a nucleocapsid that forms the core of a mature virus particle. During virus entry, may induce genome penetration into the host cytoplasm after hemifusion induced by the surface proteins. Can migrate to the cell nucleus where it modulates host functions. Inhibits RNA silencing by interfering with host Dicer. Its function is as follows. Prevents premature fusion activity of envelope proteins in trans-Golgi by binding to envelope protein E at pH6.0. After virion release in extracellular space, gets dissociated from E dimers. In terms of biological role, acts as a chaperone for envelope protein E during intracellular virion assembly by masking and inactivating envelope protein E fusion peptide. prM is the only viral peptide matured by host furin in the trans-Golgi network probably to avoid catastrophic activation of the viral fusion activity in acidic Golgi compartment prior to virion release. prM-E cleavage is inefficient, and many virions are only partially matured. These uncleaved prM would play a role in immune evasion. Functionally, may play a role in virus budding. Exerts cytotoxic effects by activating a mitochondrial apoptotic pathway through M ectodomain. May display a viroporin activity. Binds to host cell surface receptor and mediates fusion between viral and cellular membranes. Envelope protein is synthesized in the endoplasmic reticulum in the form of heterodimer with protein prM. They play a role in virion budding in the ER, and the newly formed immature particle is covered with 60 spikes composed of heterodimer between precursor prM and envelope protein E. The virion is transported to the Golgi apparatus where the low pH causes dissociation of PrM-E heterodimers and formation of E homodimers. prM-E cleavage is inefficient, and many virions are only partially matured. These uncleaved prM would play a role in immune evasion. Its function is as follows. Involved in immune evasion, pathogenesis and viral replication. Once cleaved off the polyprotein, is targeted to three destinations: the viral replication cycle, the plasma membrane and the extracellular compartment. Essential for viral replication. Required for formation of the replication complex and recruitment of other non-structural proteins to the ER-derived membrane structures. Excreted as a hexameric lipoparticle that plays a role against host immune response. Antagonizing the complement function. Binds to the host macrophages and dendritic cells. Inhibits signal transduction originating from Toll-like receptor 3 (TLR3). In terms of biological role, component of the viral RNA replication complex that functions in virion assembly and antagonizes the host immune response. Functionally, required cofactor for the serine protease function of NS3. May have membrane-destabilizing activity and form viroporins. Displays three enzymatic activities: serine protease, NTPase and RNA helicase. NS3 serine protease, in association with NS2B, performs its autocleavage and cleaves the polyprotein at dibasic sites in the cytoplasm: C-prM, NS2A-NS2B, NS2B-NS3, NS3-NS4A, NS4A-2K and NS4B-NS5. NS3 RNA helicase binds RNA and unwinds dsRNA in the 3' to 5' direction. Its function is as follows. Regulates the ATPase activity of the NS3 helicase activity. NS4A allows NS3 helicase to conserve energy during unwinding. In terms of biological role, functions as a signal peptide for NS4B and is required for the interferon antagonism activity of the latter. Functionally, induces the formation of ER-derived membrane vesicles where the viral replication takes place. Inhibits interferon (IFN)-induced host STAT1 phosphorylation and nuclear translocation, thereby preventing the establishment of cellular antiviral state by blocking the IFN-alpha/beta pathway. Inhibits STAT2 translocation in the nucleus after IFN-alpha treatment. Replicates the viral (+) and (-) RNA genome, and performs the capping of genomes in the cytoplasm. NS5 methylates viral RNA cap at guanine N-7 and ribose 2'-O positions. Besides its role in RNA genome replication, also prevents the establishment of cellular antiviral state by blocking the interferon-alpha/beta (IFN-alpha/beta) signaling pathway. Inhibits host TYK2 and STAT2 phosphorylation, thereby preventing activation of JAK-STAT signaling pathway. The polypeptide is Genome polyprotein (Homo sapiens (Human)).